The sequence spans 174 residues: Translation initiation factor IF-3 (174 aa).

Belongs to the IF-3 family. Monomer.

The protein resides in the cytoplasm. Its function is as follows. IF-3 binds to the 30S ribosomal subunit and shifts the equilibrium between 70S ribosomes and their 50S and 30S subunits in favor of the free subunits, thus enhancing the availability of 30S subunits on which protein synthesis initiation begins. The chain is Translation initiation factor IF-3 from Xanthobacter autotrophicus (strain ATCC BAA-1158 / Py2).